Consider the following 434-residue polypeptide: uncharacterized protein (434 aa).

The region spanning 4-62 is the TRAM domain; the sequence is LLTIHTQVEGEITALAFGGAGILRYHGFVIFVPFTAPGDQIICRIIEIKKSFAVAELVK. 4 residues coordinate [4Fe-4S] cluster: C75, C81, C84, and C161. S-adenosyl-L-methionine contacts are provided by Q266, Y295, E316, and N364. Catalysis depends on C391, which acts as the Nucleophile.

It belongs to the class I-like SAM-binding methyltransferase superfamily. RNA M5U methyltransferase family.

This is an uncharacterized protein from Protochlamydia amoebophila (strain UWE25).